Here is a 62-residue protein sequence, read N- to C-terminus: Large ribosomal subunit protein eL37 (62 aa).

Cys20, Cys23, Cys35, and Cys38 together coordinate Zn(2+). The C4-type zinc finger occupies 20–38 (CRRCGRRAYHVRKGYCAAC).

This sequence belongs to the eukaryotic ribosomal protein eL37 family. Zn(2+) serves as cofactor.

Binds to the 23S rRNA. The chain is Large ribosomal subunit protein eL37 from Methanopyrus kandleri (strain AV19 / DSM 6324 / JCM 9639 / NBRC 100938).